Consider the following 355-residue polypeptide: 6-aminohexanoate-oligomer endohydrolase (355 aa).

The active-site Nucleophile is T267.

The protein belongs to the peptidase S58 family. Heterotetramer composed of 4 alpha/beta heterodimers. Expressed as an inactive precursor that is cleaved autocatalytically at Asn266/Thr267 to generate an active enzyme composed of an alpha subunit and a beta subunit.

The catalysed reaction is [N-(6-aminohexanoyl)]n + H2O = [N-(6-aminohexanoyl)]n-x + [N-(6-aminohexanoyl)]x.. Its pathway is xenobiotic degradation; nylon-6 oligomer degradation. Its function is as follows. Involved in the degradation of nylon-6 oligomers. Degrades cyclic and linear oligomers of 6-aminohexanoate (Ahx) with a degree of polymerization greater than three by an endo-type mode. Cannot use Ahx cyclic dimer or the Ahx linear dimer. The protein is 6-aminohexanoate-oligomer endohydrolase of Agromyces sp. (strain KY5R).